We begin with the raw amino-acid sequence, 224 residues long: Orotate phosphoribosyltransferase (224 aa).

Position 29 (Lys-29) interacts with 5-phospho-alpha-D-ribose 1-diphosphate. 37–38 (FF) serves as a coordination point for orotate. 5-phospho-alpha-D-ribose 1-diphosphate is bound by residues 75-76 (YK), Arg-105, Lys-106, Lys-109, His-111, and 130-138 (DDVITAGTS). 2 residues coordinate orotate: Thr-134 and Arg-162.

Belongs to the purine/pyrimidine phosphoribosyltransferase family. PyrE subfamily. In terms of assembly, homodimer. Mg(2+) is required as a cofactor.

It catalyses the reaction orotidine 5'-phosphate + diphosphate = orotate + 5-phospho-alpha-D-ribose 1-diphosphate. The protein operates within pyrimidine metabolism; UMP biosynthesis via de novo pathway; UMP from orotate: step 1/2. Catalyzes the transfer of a ribosyl phosphate group from 5-phosphoribose 1-diphosphate to orotate, leading to the formation of orotidine monophosphate (OMP). In Bordetella parapertussis (strain 12822 / ATCC BAA-587 / NCTC 13253), this protein is Orotate phosphoribosyltransferase.